The following is a 630-amino-acid chain: Long-chain-fatty-acid--AMP ligase FadD32 (630 aa).

ATP is bound by residues 187–192 (TSGSTR), Ser342, Ala346, Asp469, and Arg483.

This sequence belongs to the ATP-dependent AMP-binding enzyme family. Monomer.

It catalyses the reaction a long-chain fatty acid + holo-[ACP] + ATP = a long-chain fatty acyl-[ACP] + AMP + diphosphate. The enzyme catalyses decanoate + ATP + H(+) = decanoyl-AMP + diphosphate. The catalysed reaction is dodecanoate + ATP + H(+) = dodecanoyl-AMP + diphosphate. It carries out the reaction tetradecanoate + ATP + H(+) = tetradecanoyl-AMP + diphosphate. The protein operates within lipid metabolism; mycolic acid biosynthesis. Its activity is regulated as follows. The acyl-AMP ligase activity is inhibited by the alkylphosphate ester of AMP, adenosine 50-dodecylphosphate (AMPC12). Also inhibited by eicosyl-AMP (AMPC20). Its function is as follows. Involved in the biosynthesis of mycolic acids. Catalyzes the activation of long-chain fatty acids as acyl-adenylates (acyl-AMP), which are then transferred to the phosphopantetheine arm of the polyketide synthase Pks13 for further chain extension. Can use decanoate (C10), dodecanoate (C12) and tetradecanoate (C14). This is Long-chain-fatty-acid--AMP ligase FadD32 from Mycolicibacterium smegmatis (strain ATCC 700084 / mc(2)155) (Mycobacterium smegmatis).